The chain runs to 172 residues: MQNITDGSFGFDTDILATNLINLSAVLGVLIFFGKGVLSDLLDNRKQRILRTIRNSEELRETAIEQLEKARARLRKVEMEADRFRVNGYAEIEREKLNLINSIYTSLEQFENDKNKTIHFEQQRAINQVQQSVLQQALQGALGTLNSCLNNELHLRTIGATIGMFGSMKAKK.

A helical membrane pass occupies residues isoleucine 15 to valine 37.

This sequence belongs to the ATPase B chain family. In terms of assembly, F-type ATPases have 2 components, F(1) - the catalytic core - and F(0) - the membrane proton channel. F(1) has five subunits: alpha(3), beta(3), gamma(1), delta(1), epsilon(1). F(0) has four main subunits: a(1), b(1), b'(1) and c(10-14). The alpha and beta chains form an alternating ring which encloses part of the gamma chain. F(1) is attached to F(0) by a central stalk formed by the gamma and epsilon chains, while a peripheral stalk is formed by the delta, b and b' chains.

Its subcellular location is the plastid. The protein resides in the chloroplast thylakoid membrane. In terms of biological role, f(1)F(0) ATP synthase produces ATP from ADP in the presence of a proton or sodium gradient. F-type ATPases consist of two structural domains, F(1) containing the extramembraneous catalytic core and F(0) containing the membrane proton channel, linked together by a central stalk and a peripheral stalk. During catalysis, ATP synthesis in the catalytic domain of F(1) is coupled via a rotary mechanism of the central stalk subunits to proton translocation. Functionally, component of the F(0) channel, it forms part of the peripheral stalk, linking F(1) to F(0). In Pisum sativum (Garden pea), this protein is ATP synthase subunit b, chloroplastic.